A 706-amino-acid polypeptide reads, in one-letter code: Termination factor NPH-I homolog (706 aa).

The Helicase ATP-binding domain maps to 62–227 (IGQGENTRGL…VPCFNMLSGR (166 aa)). Position 75 to 82 (75 to 82 (HQMGMGKT)) interacts with ATP. The DEAH box signature appears at 168 to 171 (DEAH). In terms of domain architecture, Helicase C-terminal spans 417–599 (QCLQPLKVLE…HLNSAFRDLL (183 aa)).

This sequence belongs to the DEAD box helicase family. DEAH subfamily. In terms of assembly, part of the viral DNA-directed RNA polymerase that consists of 8 polII-like subunits (RPB1, RPB2, RPB3, RPB5, RPB6, RPB7, RPB9, RPB10), a capping enzyme and a termination factor.

Its subcellular location is the virion. Functionally, putative DNA-dependent ATPase required for providing the needed energy to achieve the termination of early transcripts. The sequence is that of Termination factor NPH-I homolog from African swine fever virus (isolate Tick/South Africa/Pretoriuskop Pr4/1996) (ASFV).